Reading from the N-terminus, the 353-residue chain is Heterogeneous nuclear ribonucleoproteins A2/B1 (353 aa).

N-acetylmethionine is present on Met1. Thr4 is modified (phosphothreonine). Positions 9 to 15 (PLERKKR) match the Nuclear localization signal motif. RRM domains lie at 21-104 (RKLF…ESGK) and 112-191 (KKLF…LSRQ). A Glycyl lysine isopeptide (Lys-Gly) (interchain with G-Cter in SUMO2) cross-link involves residue Lys22. Ser29 is modified (phosphoserine). Arg38 is modified (omega-N-methylarginine). Residue Ser85 is modified to Phosphoserine. Lys104 bears the N6,N6-dimethyllysine; alternate mark. A Glycyl lysine isopeptide (Lys-Gly) (interchain with G-Cter in SUMO2); alternate cross-link involves residue Lys104. Residues Lys112, Lys120, and Lys137 each participate in a glycyl lysine isopeptide (Lys-Gly) (interchain with G-Cter in SUMO2) cross-link. Residue Thr140 is modified to Phosphothreonine. Ser149 bears the Phosphoserine mark. Residue Lys152 forms a Glycyl lysine isopeptide (Lys-Gly) (interchain with G-Cter in SUMO2) linkage. Position 159 is a phosphothreonine (Thr159). Glycyl lysine isopeptide (Lys-Gly) (interchain with G-Cter in SUMO2); alternate cross-links involve residues Lys168 and Lys173. Residues Lys168 and Lys173 each carry the N6-acetyllysine; alternate modification. Thr176 carries the phosphothreonine modification. Lys186 is covalently cross-linked (Glycyl lysine isopeptide (Lys-Gly) (interchain with G-Cter in SUMO2)). Ser189 and Ser201 each carry phosphoserine. The tract at residues 193 to 353 (MQEVQSSRSG…SGGYGGRSRY (161 aa)) is disordered. Residues 202 to 223 (GRGGNFGFGDSRGGGGNFGPGP) show a composition bias toward gly residues. Residue Arg203 is modified to Asymmetric dimethylarginine; alternate. Arg203 bears the Dimethylated arginine; alternate mark. Arg203 carries the omega-N-methylarginine; alternate modification. Residue Ser212 is modified to Phosphoserine. Arg213 is modified (asymmetric dimethylarginine; alternate). Arg213 bears the Dimethylated arginine; alternate mark. At Arg213 the chain carries Omega-N-methylarginine; alternate. A Phosphoserine modification is found at Ser225. Residue Arg228 is modified to Omega-N-methylarginine. 2 positions are modified to phosphoserine: Ser231 and Ser236. Arg238 carries the post-translational modification Omega-N-methylarginine. The residue at position 259 (Ser259) is a Phosphoserine. At Arg266 the chain carries Asymmetric dimethylarginine; alternate. Arg266 carries the omega-N-methylarginine; alternate modification. Residues 308–347 (QQPSNYGPMKSGNFGGSRNMGGPYGGGNYGPGGSGGSGGY) are nuclear targeting sequence. A compositionally biased stretch (gly residues) spans 320 to 353 (NFGGSRNMGGPYGGGNYGPGGSGGSGGYGGRSRY). Position 324 is a phosphoserine (Ser324). Arg325 is modified (omega-N-methylarginine). Tyr331 bears the Phosphotyrosine mark. A phosphoserine mark is found at Ser341 and Ser344. At Tyr347 the chain carries Phosphotyrosine. Arg350 bears the Omega-N-methylarginine mark.

In terms of assembly, homodimer; dimerization is required for nucleocytoplasmic translocation. Identified in the spliceosome C complex. Identified in a IGF2BP1-dependent mRNP granule complex containing untranslated mRNAs. Interacts with IGF2BP1. Interacts with C9orf72. Interacts with DGCR8. Interacts with TARDBP. Interacts with CKAP5. Interacts with TBK1. Interacts with STING1. Interacts with SRC. Interacts with PPIA/CYPA. Interacts (via C-terminus) with FAM76B; the interaction results in retention of HNRNPA2B1 in the nucleus and inhibition of the NF-kappa-B-mediated inflammatory pathway. Interacts with NF-kappa-B inhibitors NFKBIA and NFKBIE; the interaction may be mediated by the RRM2 domain of HNRNPA2B1, and HNRNPA2B1 may interact simultaneously with FAM76B and either NFKBIA or NFKBIE to form a complex. Asymmetric dimethylation at Arg-266 constitutes the major methylation site. According to a report, methylation affects subcellular location and promotes nuclear localization. According to another report, methylation at Arg-266 does not influence nucleocytoplasmic shuttling. Post-translationally, sumoylated in exosomes, promoting miRNAs-binding. In terms of tissue distribution, in the brain, isoform A2 and isoform B1 are abundant in large ganglion-type neurons, such as Purkinje cells, and are less abundant in neighboring glia cells. Isoform A2 is more abundant than isoform B1 in brain. In testis, isoform A2 and isoform B1 are present in spermatogonia and spermatocytes, but not in spermatids or sperm. Isoform A2 is more abundant in the adrenal medulla than in the cortical cells. Isoform B1 is found in both adrenal medulla and cortical cells. Isoform A2 is more abundant than isoform B1 in the adrenal gland. Isoform A2 and isoform B1 are both detected in pancreas and kidney, and at lower levels in heart and lung. Isoform B1 is more abundant than isoform A2 in heart, lung and intestine (at protein level). Isoform A2b and isoform B1b are testis-specific.

Its subcellular location is the nucleus. The protein resides in the cytoplasm. It localises to the nucleoplasm. It is found in the cytoplasmic granule. The protein localises to the secreted. Its subcellular location is the extracellular exosome. Its function is as follows. Heterogeneous nuclear ribonucleoprotein (hnRNP) that associates with nascent pre-mRNAs, packaging them into hnRNP particles. The hnRNP particle arrangement on nascent hnRNA is non-random and sequence-dependent and serves to condense and stabilize the transcripts and minimize tangling and knotting. Packaging plays a role in various processes such as transcription, pre-mRNA processing, RNA nuclear export, subcellular location, mRNA translation and stability of mature mRNAs. Forms hnRNP particles with at least 20 other different hnRNP and heterogeneous nuclear RNA in the nucleus. Involved in transport of specific mRNAs to the cytoplasm in oligodendrocytes and neurons: acts by specifically recognizing and binding the A2RE (21 nucleotide hnRNP A2 response element) or the A2RE11 (derivative 11 nucleotide oligonucleotide) sequence motifs present on some mRNAs, and promotes their transport to the cytoplasm. Specifically binds single-stranded telomeric DNA sequences, protecting telomeric DNA repeat against endonuclease digestion. Also binds other RNA molecules, such as primary miRNA (pri-miRNAs): acts as a nuclear 'reader' of the N6-methyladenosine (m6A) mark by specifically recognizing and binding a subset of nuclear m6A-containing pri-miRNAs. Binding to m6A-containing pri-miRNAs promotes pri-miRNA processing by enhancing binding of DGCR8 to pri-miRNA transcripts. Involved in miRNA sorting into exosomes following sumoylation, possibly by binding (m6A)-containing pre-miRNAs. Acts as a regulator of efficiency of mRNA splicing, possibly by binding to m6A-containing pre-mRNAs. Plays a role in the splicing of pyruvate kinase PKM by binding repressively to sequences flanking PKM exon 9, inhibiting exon 9 inclusion and resulting in exon 10 inclusion and production of the PKM M2 isoform. Also plays a role in the activation of the innate immune response. Mechanistically, senses the presence of viral DNA in the nucleus, homodimerizes and is demethylated by JMJD6. In turn, translocates to the cytoplasm where it activates the TBK1-IRF3 pathway, leading to interferon alpha/beta production. The chain is Heterogeneous nuclear ribonucleoproteins A2/B1 from Rattus norvegicus (Rat).